A 338-amino-acid chain; its full sequence is Eukaryotic translation initiation factor 3 subunit H (338 aa).

The MPN domain maps to 22–154 (VQCDGLAVMK…LKAYRLTPQA (133 aa)).

It belongs to the eIF-3 subunit H family. As to quaternary structure, component of the eukaryotic translation initiation factor 3 (eIF-3) complex. The eIF-3 complex interacts with pix. Interacts with mxt.

It localises to the cytoplasm. In terms of biological role, component of the eukaryotic translation initiation factor 3 (eIF-3) complex, which is involved in protein synthesis of a specialized repertoire of mRNAs and, together with other initiation factors, stimulates binding of mRNA and methionyl-tRNAi to the 40S ribosome. The eIF-3 complex specifically targets and initiates translation of a subset of mRNAs involved in cell proliferation. In Drosophila sechellia (Fruit fly), this protein is Eukaryotic translation initiation factor 3 subunit H.